Reading from the N-terminus, the 298-residue chain is ATP synthase gamma chain (298 aa).

Belongs to the ATPase gamma chain family. As to quaternary structure, F-type ATPases have 2 components, CF(1) - the catalytic core - and CF(0) - the membrane proton channel. CF(1) has five subunits: alpha(3), beta(3), gamma(1), delta(1), epsilon(1). CF(0) has three main subunits: a, b and c.

It localises to the cell inner membrane. Produces ATP from ADP in the presence of a proton gradient across the membrane. The gamma chain is believed to be important in regulating ATPase activity and the flow of protons through the CF(0) complex. This is ATP synthase gamma chain from Zymomonas mobilis subsp. mobilis (strain ATCC 31821 / ZM4 / CP4).